The chain runs to 485 residues: Delta(14)-sterol reductase (485 aa).

Transmembrane regions (helical) follow at residues 18-38, 77-97, 131-151, 155-175, and 319-339; these read FFGP…VYVF, GLVS…SLIL, LAIL…WTFI, FIQI…FVYV, and SLGP…FYIF. NADP(+) contacts are provided by residues Lys346, Arg350, Leu373, Trp378, and 385-386; that span reads NY. Residues 431–451 traverse the membrane as a helical segment; it reads AKGWGMLITYFYILYFAILLI. NADP(+) is bound by residues Asp457, 461–465, and Tyr472; that span reads CHRKY.

This sequence belongs to the ERG4/ERG24 family.

It localises to the membrane. It carries out the reaction 4,4-dimethyl-5alpha-cholesta-8,24-dien-3beta-ol + NADP(+) = 4,4-dimethyl-5alpha-cholesta-8,14,24-trien-3beta-ol + NADPH + H(+). Its pathway is steroid biosynthesis; zymosterol biosynthesis; zymosterol from lanosterol: step 2/6. In terms of biological role, reduces the C14=C15 double bond of 4,4-dimethyl-cholesta-8,14,24-trienol to produce 4,4-dimethyl-cholesta-8,24-dienol. The chain is Delta(14)-sterol reductase from Fusarium vanettenii (Neocosmospora pisi).